The chain runs to 144 residues: Maximins 8/H7 (144 aa).

The signal sequence occupies residues 1-18; it reads MKFKYIVAVSFLIASAYA. A propeptide spanning residues 19 to 43 is cleaved from the precursor; that stretch reads RSEENDEQSLSQRDVLEEESLREIR. Asn-70 is subject to Asparagine amide. A propeptide spanning residues 74 to 123 is cleaved from the precursor; that stretch reads TAEDHEVMKRLEAVMRDLDSLDYPEEASERETRGFNQEEIANLFTKKEKR. Leu-143 carries the leucine amide modification.

This sequence belongs to the bombinin family. In terms of tissue distribution, expressed by the skin glands.

The protein localises to the secreted. In terms of biological role, maximin-8 shows antimicrobial activity against bacteria and against the fungus C.albicans. It has little hemolytic activity. Its function is as follows. Maximin-H7 shows antimicrobial activity against bacteria and against the fungus C.albicans. Shows strong hemolytic activity. In Bombina maxima (Giant fire-bellied toad), this protein is Maximins 8/H7.